Reading from the N-terminus, the 484-residue chain is Cysteine--tRNA ligase (484 aa).

Cysteine 27 provides a ligand contact to Zn(2+). Residues 29 to 39 (PTTYNYIHLGN) carry the 'HIGH' region motif. Residues cysteine 207, histidine 232, and glutamate 236 each coordinate Zn(2+). The short motif at 264–268 (KMSKS) is the 'KMSKS' region element. Lysine 267 serves as a coordination point for ATP.

It belongs to the class-I aminoacyl-tRNA synthetase family. In terms of assembly, monomer. Zn(2+) is required as a cofactor.

It localises to the cytoplasm. It catalyses the reaction tRNA(Cys) + L-cysteine + ATP = L-cysteinyl-tRNA(Cys) + AMP + diphosphate. The polypeptide is Cysteine--tRNA ligase (Pelotomaculum thermopropionicum (strain DSM 13744 / JCM 10971 / SI)).